The sequence spans 186 residues: dCTP deaminase (186 aa).

Position 106–111 (Lys106–Arg111) interacts with dCTP. Glu132 functions as the Proton donor/acceptor in the catalytic mechanism. DCTP is bound by residues Gln151, Tyr166, and Gln176.

Belongs to the dCTP deaminase family. As to quaternary structure, homotrimer.

The catalysed reaction is dCTP + H2O + H(+) = dUTP + NH4(+). Its pathway is pyrimidine metabolism; dUMP biosynthesis; dUMP from dCTP (dUTP route): step 1/2. In terms of biological role, catalyzes the deamination of dCTP to dUTP. The sequence is that of dCTP deaminase from Nautilia profundicola (strain ATCC BAA-1463 / DSM 18972 / AmH).